The chain runs to 138 residues: Large ribosomal subunit protein uL16c (138 aa).

This sequence belongs to the universal ribosomal protein uL16 family. Part of the 50S ribosomal subunit.

The protein resides in the plastid. Its subcellular location is the chloroplast. In Chaetosphaeridium globosum (Charophycean green alga), this protein is Large ribosomal subunit protein uL16c.